We begin with the raw amino-acid sequence, 274 residues long: Putative pyruvate, phosphate dikinase regulatory protein (274 aa).

153-160 (GISRTSKT) is an ADP binding site.

The protein belongs to the pyruvate, phosphate/water dikinase regulatory protein family. PDRP subfamily.

It catalyses the reaction N(tele)-phospho-L-histidyl/L-threonyl-[pyruvate, phosphate dikinase] + ADP = N(tele)-phospho-L-histidyl/O-phospho-L-threonyl-[pyruvate, phosphate dikinase] + AMP + H(+). The catalysed reaction is N(tele)-phospho-L-histidyl/O-phospho-L-threonyl-[pyruvate, phosphate dikinase] + phosphate + H(+) = N(tele)-phospho-L-histidyl/L-threonyl-[pyruvate, phosphate dikinase] + diphosphate. Functionally, bifunctional serine/threonine kinase and phosphorylase involved in the regulation of the pyruvate, phosphate dikinase (PPDK) by catalyzing its phosphorylation/dephosphorylation. The sequence is that of Putative pyruvate, phosphate dikinase regulatory protein from Bartonella tribocorum (strain CIP 105476 / IBS 506).